The primary structure comprises 156 residues: D-aminoacyl-tRNA deacylase (156 aa).

The Gly-cisPro motif, important for rejection of L-amino acids motif lies at 137–138 (GP).

It belongs to the DTD family. As to quaternary structure, homodimer.

It localises to the cytoplasm. The catalysed reaction is glycyl-tRNA(Ala) + H2O = tRNA(Ala) + glycine + H(+). It catalyses the reaction a D-aminoacyl-tRNA + H2O = a tRNA + a D-alpha-amino acid + H(+). Its function is as follows. An aminoacyl-tRNA editing enzyme that deacylates mischarged D-aminoacyl-tRNAs. Also deacylates mischarged glycyl-tRNA(Ala), protecting cells against glycine mischarging by AlaRS. Acts via tRNA-based rather than protein-based catalysis; rejects L-amino acids rather than detecting D-amino acids in the active site. By recycling D-aminoacyl-tRNA to D-amino acids and free tRNA molecules, this enzyme counteracts the toxicity associated with the formation of D-aminoacyl-tRNA entities in vivo and helps enforce protein L-homochirality. In Ruegeria sp. (strain TM1040) (Silicibacter sp.), this protein is D-aminoacyl-tRNA deacylase.